The chain runs to 84 residues: MITFQWLIVRVVALFISLTILIDIEMFVVMLSFLIIHISIGLKAIIHDYIHFQKIKLMLLILLRVSAIEISRSFRTFYIIIKNT.

The Mitochondrial matrix segment spans residues M1 to T3. A helical membrane pass occupies residues F4–I24. The Mitochondrial intermembrane portion of the chain corresponds to E25–L31. A helical transmembrane segment spans residues S32–F52. H37 serves as a coordination point for heme. Y49 contacts a ubiquinone. Residues Q53 to M58 lie on the Mitochondrial matrix side of the membrane. The chain crosses the membrane as a helical span at residues L59–I81. The Mitochondrial intermembrane portion of the chain corresponds to K82–T84.

Part of an enzyme complex containing four subunits: a flavoprotein, an iron-sulfur protein, plus two membrane-anchoring proteins. The cofactor is heme.

It is found in the mitochondrion inner membrane. Its pathway is carbohydrate metabolism; tricarboxylic acid cycle. Functionally, membrane-anchoring subunit of succinate dehydrogenase (SDH). The polypeptide is Succinate dehydrogenase membrane anchor subunit (SDH4) (Chondrus crispus (Carrageen Irish moss)).